The following is a 356-amino-acid chain: Beta-hexosaminidase (356 aa).

Substrate-binding positions include D75, R83, R150, and 180 to 181 (KH). H193 serves as the catalytic Proton donor/acceptor. D264 (nucleophile) is an active-site residue.

The protein belongs to the glycosyl hydrolase 3 family. NagZ subfamily.

It is found in the cytoplasm. The enzyme catalyses Hydrolysis of terminal non-reducing N-acetyl-D-hexosamine residues in N-acetyl-beta-D-hexosaminides.. It participates in cell wall biogenesis; peptidoglycan recycling. Its function is as follows. Plays a role in peptidoglycan recycling by cleaving the terminal beta-1,4-linked N-acetylglucosamine (GlcNAc) from peptide-linked peptidoglycan fragments, giving rise to free GlcNAc, anhydro-N-acetylmuramic acid and anhydro-N-acetylmuramic acid-linked peptides. In Aromatoleum aromaticum (strain DSM 19018 / LMG 30748 / EbN1) (Azoarcus sp. (strain EbN1)), this protein is Beta-hexosaminidase.